Here is an 800-residue protein sequence, read N- to C-terminus: Endonuclease MutS2 (800 aa).

336-343 (GPNTGGKT) contributes to the ATP binding site. The Smr domain maps to 725 to 800 (LDLRGVRYEA…GDGATIVELK (76 aa)).

The protein belongs to the DNA mismatch repair MutS family. MutS2 subfamily. As to quaternary structure, homodimer. Binds to stalled ribosomes, contacting rRNA.

Functionally, endonuclease that is involved in the suppression of homologous recombination and thus may have a key role in the control of bacterial genetic diversity. Acts as a ribosome collision sensor, splitting the ribosome into its 2 subunits. Detects stalled/collided 70S ribosomes which it binds and splits by an ATP-hydrolysis driven conformational change. Acts upstream of the ribosome quality control system (RQC), a ribosome-associated complex that mediates the extraction of incompletely synthesized nascent chains from stalled ribosomes and their subsequent degradation. Probably generates substrates for RQC. The chain is Endonuclease MutS2 from Leuconostoc mesenteroides subsp. mesenteroides (strain ATCC 8293 / DSM 20343 / BCRC 11652 / CCM 1803 / JCM 6124 / NCDO 523 / NBRC 100496 / NCIMB 8023 / NCTC 12954 / NRRL B-1118 / 37Y).